The chain runs to 31 residues: Cyclotide mech-6 (31 aa).

The segment at residues 1-31 (GVIPCGESCVFIPCISSVVGCTCKNKVCYRN) is a cross-link (cyclopeptide (Gly-Asn)). 3 disulfide bridges follow: cysteine 5–cysteine 21, cysteine 9–cysteine 23, and cysteine 14–cysteine 28.

Post-translationally, this is a cyclic peptide. Contains 3 disulfide bonds.

In terms of biological role, probably participates in a plant defense mechanism (Potential). Binds to and induces leakage in phospholipd membranes, particularly ones containing 1-palmitoyl-2-oleophosphatidylethanolamine (POPE). This chain is Cyclotide mech-6, found in Melicytus chathamicus (Chatham Island mahoe).